The primary structure comprises 362 residues: Endolytic peptidoglycan transglycosylase RlpA (362 aa).

The N-terminal stretch at 1 to 17 is a signal peptide; the sequence is MRKQWLGICIAAGMLAA. A lipid anchor (N-palmitoyl cysteine) is attached at Cys18. Cys18 carries S-diacylglycerol cysteine lipidation. The disordered stretch occupies residues 198-276; it reads PDLSGGAGTS…PSTTPATSPA (79 aa). The segment covering 262-276 has biased composition (low complexity); sequence PVVTAPSTTPATSPA. The region spanning 285-361 is the SPOR domain; sequence QSASGNFMVQ…AQLQSFITTA (77 aa).

It belongs to the RlpA family.

Its subcellular location is the cell membrane. Functionally, lytic transglycosylase with a strong preference for naked glycan strands that lack stem peptides. This Escherichia coli (strain K12) protein is Endolytic peptidoglycan transglycosylase RlpA.